The following is a 395-amino-acid chain: Succinyl-diaminopimelate desuccinylase 2 (395 aa).

Histidine 79 contributes to the Zn(2+) binding site. The active site involves aspartate 81. Aspartate 112 contributes to the Zn(2+) binding site. The Proton acceptor role is filled by glutamate 145. Glutamate 146, glutamate 174, and histidine 363 together coordinate Zn(2+).

Belongs to the peptidase M20A family. DapE subfamily. Homodimer. Zn(2+) serves as cofactor. Co(2+) is required as a cofactor.

It carries out the reaction N-succinyl-(2S,6S)-2,6-diaminopimelate + H2O = (2S,6S)-2,6-diaminopimelate + succinate. It participates in amino-acid biosynthesis; L-lysine biosynthesis via DAP pathway; LL-2,6-diaminopimelate from (S)-tetrahydrodipicolinate (succinylase route): step 3/3. Catalyzes the hydrolysis of N-succinyl-L,L-diaminopimelic acid (SDAP), forming succinate and LL-2,6-diaminopimelate (DAP), an intermediate involved in the bacterial biosynthesis of lysine and meso-diaminopimelic acid, an essential component of bacterial cell walls. The sequence is that of Succinyl-diaminopimelate desuccinylase 2 from Ruegeria sp. (strain TM1040) (Silicibacter sp.).